Here is a 257-residue protein sequence, read N- to C-terminus: Transcription factor GHD7 (257 aa).

Residue S68 is modified to Phosphoserine; by CK1. The 43-residue stretch at 190-232 folds into the CCT domain; it reads REAKLMRYKEKRKKRCYEKQIRYASRKAYAEMRPRVRGRFAKE. A Nuclear localization signal motif is present at residues 198 to 204; the sequence is KEKRKKR. Residues 226–245 form a disordered region; the sequence is RGRFAKEPDQEAVAPPSTYV.

As to quaternary structure, interacts with HD16/EL1. Phosphorylated at Ser-68 by HD16/EL1, a casein kinase 1. In terms of tissue distribution, expressed in the apical meristem, developing leaves, leaf sheaths of young seedling, root meristem, epidermal layer of developing stems and branch-primordia of developing panicles.

The protein localises to the nucleus. Functionally, probable transcription factor involved in the regulation of flowering time under long day (LD) conditions. Plays a major role as repressor of flowering. Controls flowering time by negatively regulating the expression of EHD1 and HD3A. The sequence is that of Transcription factor GHD7 from Oryza sativa subsp. japonica (Rice).